We begin with the raw amino-acid sequence, 214 residues long: Adenylate kinase (214 aa).

10-15 (GAGKGT) contributes to the ATP binding site. Positions 30–59 (STGDIFRANIKNGTELGKKAKTYMDQGALV) are NMP. AMP contacts are provided by residues T31, R36, 57–59 (ALV), 85–88 (GFPR), and Q92. The interval 126-163 (GRRACLNCGATYHIVFNPTKVEGKCDACGADTVLRDDD) is LID. Position 127 (R127) interacts with ATP. Zn(2+) contacts are provided by C130 and C133. 136–137 (TY) lines the ATP pocket. C150 and C153 together coordinate Zn(2+). Positions 160 and 171 each coordinate AMP. K199 provides a ligand contact to ATP.

Belongs to the adenylate kinase family. As to quaternary structure, monomer.

Its subcellular location is the cytoplasm. It catalyses the reaction AMP + ATP = 2 ADP. Its pathway is purine metabolism; AMP biosynthesis via salvage pathway; AMP from ADP: step 1/1. In terms of biological role, catalyzes the reversible transfer of the terminal phosphate group between ATP and AMP. Plays an important role in cellular energy homeostasis and in adenine nucleotide metabolism. The protein is Adenylate kinase of Agathobacter rectalis (strain ATCC 33656 / DSM 3377 / JCM 17463 / KCTC 5835 / VPI 0990) (Eubacterium rectale).